The primary structure comprises 455 residues: Oxidative stress induced growth inhibitor homolog osgn-1 (455 aa).

It belongs to the OKL38 family. The cofactor is NADPH.

The protein resides in the midbody. Its function is as follows. Monooxygenase catalytic activity. Involved in regulation of cytokinesis; promotes rho-1/RhoA activity, probably acting locally at the midbody in late cytokinesis. Monooxygenase activity is required to stabilize structures between primordial germ cells (PGCs), termed intercellular bridges. Dispensable for fertility. The sequence is that of Oxidative stress induced growth inhibitor homolog osgn-1 from Caenorhabditis elegans.